We begin with the raw amino-acid sequence, 324 residues long: Putative divalent cation/proton antiporter TMEM165 (324 aa).

The N-terminal stretch at 1–33 (MAAAAPGNGRASAPRLLLLFLVPLLWAPAAVRA) is a signal peptide. The Lumenal segment spans residues 34–89 (GPDEDLSHRNKEPPAPAQQLQPQPVAVQGPEPARVEKIFTPAAPVHTNKEDPATQT). Over residues 35 to 45 (PDEDLSHRNKE) the composition is skewed to basic and acidic residues. Positions 35 to 59 (PDEDLSHRNKEPPAPAQQLQPQPVA) are disordered. The span at 50–59 (AQQLQPQPVA) shows a compositional bias: low complexity. A helical membrane pass occupies residues 90 to 110 (NLGFIHAFVAAISVIIVSELG). The Cytoplasmic segment spans residues 111–126 (DKTFFIAAIMAMRYNR). The helical transmembrane segment at 127 to 147 (LTVLAGAMLALGLMTCLSVLF) threads the bilayer. The Lumenal segment spans residues 148 to 151 (GYAT). A helical transmembrane segment spans residues 152-172 (TVIPRVYTYYVSTVLFAIFGI). The Cytoplasmic portion of the chain corresponds to 173–228 (RMLREGLKMSPDEGQEELEEVQAELKKKDEEFQRTKLLNGPGDVETGTSITVPQKK). Positions 184-211 (DEGQEELEEVQAELKKKDEEFQRTKLLN) form a coiled coil. Residues 229-249 (WLHFISPIFVQALTLTFLAEW) traverse the membrane as a helical segment. Topologically, residues 250 to 267 (GDRSQLTTIVLAAREDPY) are lumenal. Residues 268–288 (GVAVGGTVGHCLCTGLAVIGG) traverse the membrane as a helical segment. At 289-299 (RMIAQKISVRT) the chain is on the cytoplasmic side. Residues 300 to 320 (VTIIGGIVFLAFAFSALFISP) traverse the membrane as a helical segment. The Lumenal portion of the chain corresponds to 321-324 (DSGF).

It belongs to the GDT1 family. As to expression, ubiquitously expressed.

It localises to the golgi apparatus membrane. It catalyses the reaction Ca(2+)(in) + n H(+)(out) = Ca(2+)(out) + n H(+)(in). It carries out the reaction Mn(2+)(in) + n H(+)(out) = Mn(2+)(out) + n H(+)(in). Its function is as follows. Putative divalent cation:proton antiporter that exchanges calcium or manganese ions for protons across the Golgi membrane. Mediates the reversible transport of calcium or manganese to the Golgi lumen driven by the proton gradient and possibly the membrane potential generated by V-ATPase. Provides calcium or manganese cofactors to resident Golgi enzymes and contributes to the maintenance of an acidic luminal Golgi pH required for proper functioning of the secretory pathway. Promotes Ca(2+) storage within the Golgi lumen of the mammary epithelial cells to be then secreted into milk. The transport mechanism and stoichiometry remains to be elucidated. The chain is Putative divalent cation/proton antiporter TMEM165 from Homo sapiens (Human).